Consider the following 759-residue polypeptide: Arylphorin subunit C223 (759 aa).

The first 15 residues, 1-15 (MKIAIVLLAIVGLAA), serve as a signal peptide directing secretion.

The protein belongs to the hemocyanin family. As to quaternary structure, heterohexamer. Fat body.

Its subcellular location is the secreted. The protein resides in the extracellular space. Arylphorin is a larval storage protein (LSP) which may serve as a storage protein used primarily as a source of aromatic amino acids for protein synthesis during metamorphosis. It is a constituent of the sclerotizing system of the cuticle, and serves as a carrier for ecdysteroid hormone. The polypeptide is Arylphorin subunit C223 (Calliphora vicina (Blue blowfly)).